The following is a 294-amino-acid chain: P32 adhesin (294 aa).

Transmembrane regions (helical) follow at residues 11 to 31 (LVGVSFVFSGVIALGTGVGLT) and 66 to 86 (VVGAGAGLIVVSLLLGLGIGI). A run of 2 repeats spans residues 172-193 (GGPMQPNQMGMRPGFNQMPPQM) and 194-214 (GGMPPNQMGMRPGFNQMPPQM). The segment at 172–214 (GGPMQPNQMGMRPGFNQMPPQMGGMPPNQMGMRPGFNQMPPQM) is 2 X 22 AA repeats. Residues 234-294 (RPGFRPQPGG…AGFPPQNGPR (61 aa)) are disordered. Gly residues predominate over residues 241 to 256 (PGGGVPMGNKAGGGFN).

The protein localises to the cell projection. The protein resides in the attachment organelle membrane. Functionally, adhesin necessary for successful cytadherence and virulence. In Mycoplasmoides gallisepticum (strain R(low / passage 15 / clone 2)) (Mycoplasma gallisepticum), this protein is P32 adhesin (mgc2).